The following is a 252-amino-acid chain: Probable transcriptional regulatory protein RT0442 (252 aa).

The segment at 1-22 is disordered; it reads MSGHSKFKNIQHRKGAQDKKKS.

It belongs to the TACO1 family.

The protein resides in the cytoplasm. This is Probable transcriptional regulatory protein RT0442 from Rickettsia typhi (strain ATCC VR-144 / Wilmington).